A 306-amino-acid polypeptide reads, in one-letter code: D-alanine--D-alanine ligase (306 aa).

The ATP-grasp domain maps to Lys-100 to Glu-295. Arg-127–Thr-180 serves as a coordination point for ATP. Asp-249, Glu-262, and Asn-264 together coordinate Mg(2+).

The protein belongs to the D-alanine--D-alanine ligase family. Mg(2+) serves as cofactor. Mn(2+) is required as a cofactor.

The protein resides in the cytoplasm. It catalyses the reaction 2 D-alanine + ATP = D-alanyl-D-alanine + ADP + phosphate + H(+). It participates in cell wall biogenesis; peptidoglycan biosynthesis. Functionally, cell wall formation. The protein is D-alanine--D-alanine ligase of Desulfovibrio desulfuricans (strain ATCC 27774 / DSM 6949 / MB).